The sequence spans 630 residues: Terpinolene synthase, chloroplastic (630 aa).

A chloroplast-targeting transit peptide spans 1–52 (MALVSILPLSSKSVLHKSWIVSTYEHKAISRTIPNLGLRGRGKSVTHSLRMS). Residues Asp-381, Asp-385, Asn-525, and Asp-533 each coordinate Mg(2+). The short motif at 381-385 (DDIYD) is the DDXXD motif element.

It belongs to the terpene synthase family. Tpsd subfamily. It depends on Mg(2+) as a cofactor. The cofactor is Mn(2+). K(+) serves as cofactor.

The protein resides in the plastid. It is found in the chloroplast. It carries out the reaction (2E)-geranyl diphosphate = terpinolene + diphosphate. Its pathway is terpene metabolism; oleoresin biosynthesis. In terms of biological role, involved in defensive oleoresin formation in conifers in response to insect attack or other injury. Involved in monoterpene (C10) olefins biosynthesis. In Abies grandis (Grand fir), this protein is Terpinolene synthase, chloroplastic (ag9).